The following is a 365-amino-acid chain: Serpentine receptor class epsilon-38 (365 aa).

7 helical membrane-spanning segments follow: residues 26–46 (GMYL…GVII), 65–85 (IMTA…LLII), 124–144 (ALVI…FGIL), 168–188 (IPVF…YFVL), 196–216 (LGTS…LAVW), 256–276 (LVIV…CLVI), and 285–305 (IFIH…CSTL).

The protein belongs to the nematode receptor-like protein sre family.

It is found in the membrane. In Caenorhabditis elegans, this protein is Serpentine receptor class epsilon-38 (sre-38).